The following is a 211-amino-acid chain: Large ribosomal subunit protein uL3 (211 aa).

The interval 134 to 155 is disordered; sequence ATHGNSLSHRAPGSIGQNQTPG. Position 152 is an N5-methylglutamine (Gln-152).

The protein belongs to the universal ribosomal protein uL3 family. In terms of assembly, part of the 50S ribosomal subunit. Forms a cluster with proteins L14 and L19. Post-translationally, methylated by PrmB.

Its function is as follows. One of the primary rRNA binding proteins, it binds directly near the 3'-end of the 23S rRNA, where it nucleates assembly of the 50S subunit. The sequence is that of Large ribosomal subunit protein uL3 from Methylococcus capsulatus (strain ATCC 33009 / NCIMB 11132 / Bath).